A 212-amino-acid polypeptide reads, in one-letter code: Redox-sensing transcriptional repressor Rex (212 aa).

Positions 18–57 (LYYRFVNTLKSKGIDRVNSKAISEALNIESATIRRDFSYF) form a DNA-binding region, H-T-H motif. 92–97 (GVGNLG) contributes to the NAD(+) binding site.

This sequence belongs to the transcriptional regulatory Rex family. Homodimer.

It is found in the cytoplasm. Modulates transcription in response to changes in cellular NADH/NAD(+) redox state. This Staphylococcus haemolyticus (strain JCSC1435) protein is Redox-sensing transcriptional repressor Rex.